Consider the following 803-residue polypeptide: Nucleoporin nup82 (803 aa).

In terms of assembly, component of the nuclear pore complex (NPC). NPC constitutes the exclusive means of nucleocytoplasmic transport. NPCs allow the passive diffusion of ions and small molecules and the active, nuclear transport receptor-mediated bidirectional transport of macromolecules such as proteins, RNAs, ribonucleoparticles (RNPs), and ribosomal subunits across the nuclear envelope.

The protein localises to the nucleus. It is found in the nuclear pore complex. It localises to the nucleus membrane. In terms of biological role, functions as a component of the nuclear pore complex (NPC). NPC components, collectively referred to as nucleoporins (NUPs), can play the role of both NPC structural components and of docking or interaction partners for transiently associated nuclear transport factors. In Schizosaccharomyces pombe (strain 972 / ATCC 24843) (Fission yeast), this protein is Nucleoporin nup82.